Consider the following 141-residue polypeptide: Large ribosomal subunit protein uL11c (141 aa).

It belongs to the universal ribosomal protein uL11 family. In terms of assembly, part of the ribosomal stalk of the 50S ribosomal subunit. Interacts with L10 and the large rRNA to form the base of the stalk. L10 forms an elongated spine to which L12 dimers bind in a sequential fashion forming a multimeric L10(L12)X complex.

It localises to the plastid. Its subcellular location is the chloroplast. Its function is as follows. Forms part of the ribosomal stalk which helps the ribosome interact with GTP-bound translation factors. This Cyanidium caldarium (Red alga) protein is Large ribosomal subunit protein uL11c.